Consider the following 62-residue polypeptide: Synergistic-type venom protein S2C4 (62 aa).

Cystine bridges form between Cys3-Cys24, Cys17-Cys42, and Cys46-Cys57.

This sequence belongs to the three-finger toxin family. Short-chain subfamily. Aminergic toxin sub-subfamily. Homodimer; disulfide-linked. Expressed by the venom gland.

It is found in the secreted. This protein shows a synergetic toxic effect in that it enhances the toxicity of other toxins. The chain is Synergistic-type venom protein S2C4 from Dendroaspis jamesoni kaimosae (Eastern Jameson's mamba).